A 66-amino-acid chain; its full sequence is Ocellatin-PT4 (66 aa).

The N-terminal stretch at 1–22 is a signal peptide; the sequence is MAFLKKSLFLVLFLGLVSLSIC. A propeptide spanning residues 23–39 is cleaved from the precursor; the sequence is DEEKRQDEDDDDDDDEE. The residue at position 66 (valine 66) is a Valine amide.

As to expression, expressed by the skin glands.

Its subcellular location is the secreted. In terms of biological role, has antibacterial activity against Gram-negative bacteria E.coli ATCC 25922 (MIC=80 uM), K.pneumoniae ATCC 700603 (MIC=310 uM) and S.choleraesuis ATCC 14028 (MIC=310 uM). Shows no hemolytic activity and no cytotoxicity. The protein is Ocellatin-PT4 of Leptodactylus pustulatus (Ceara white-lipped frog).